A 320-amino-acid polypeptide reads, in one-letter code: GDSL esterase/lipase At3g43570 (320 aa).

An N-terminal signal peptide occupies residues 1 to 19 (MKIQIIWLTLVLIVVEANA). Asn-25 carries N-linked (GlcNAc...) asparagine glycosylation. Ser-37 serves as the catalytic Nucleophile. Asn-287 carries N-linked (GlcNAc...) asparagine glycosylation. Catalysis depends on residues Asp-295 and His-298.

The protein belongs to the 'GDSL' lipolytic enzyme family.

Its subcellular location is the secreted. The chain is GDSL esterase/lipase At3g43570 from Arabidopsis thaliana (Mouse-ear cress).